Here is a 218-residue protein sequence, read N- to C-terminus: MRLTWPGHACVLLEGSQRVLIDPYVLNGTIPKDPDLVVLTHGHFDHFGETLTLDAPTVAVNDLAKALSALGMQATGLNFGGSITINGVTVSLTPAVHSVSMLELDGTKIMCGEAAGVVIRMDGVTVYHAGDTALFSDMRLIGELYHPDVALLPIGGRFTMDSAAAMMAAAYIGAPMVIPIHYNTWPAIEQDADAFKEAIERTTDMQVMVLPSGGSIEI.

Belongs to the UPF0173 family.

The chain is UPF0173 metal-dependent hydrolase Mpal_1063 from Methanosphaerula palustris (strain ATCC BAA-1556 / DSM 19958 / E1-9c).